The following is a 602-amino-acid chain: Sodium-independent sulfate anion transporter (602 aa).

At 1 to 47 (MSPPMSPMKPPKGFAPMSCCWSTETMQKWLPFLGWLPDYTWYALKMD) the chain is on the extracellular side. A helical membrane pass occupies residues 48 to 68 (FIAGISVGLTVIPQALAYAEV). Ala69 is a topological domain (cytoplasmic). The chain crosses the membrane as a helical span at residues 70 to 90 (GLPPQYGLYSAFMGCFVYFFL). Residues 91–115 (GTSRDVTLGPTAIMSLLVSFYTFHE) lie on the Extracellular side of the membrane. The chain crosses the membrane as a helical span at residues 116 to 136 (PAYAVLLAFLTGCIQLGMGFL). Over 137–143 (RLGLLLD) the chain is Cytoplasmic. The helical transmembrane segment at 144 to 164 (FISCPVIKGFTSAAAIIIGFG) threads the bilayer. Residues 165–193 (QIKNLLGLQHIPRQFFLQVYYTFHNIGET) are Extracellular-facing. A helical transmembrane segment spans residues 194–214 (RVGDAVLGLVCMVLLLVLKLM). Over 215 to 246 (RDHVPPVHPEMPTGVRLSHGLVWTATTARNAL) the chain is Cytoplasmic. Residues 247–267 (VVSFAALVAYSFQVTGYQPFV) form a helical membrane-spanning segment. Topologically, residues 268–300 (LTGKTPEGLPDAHIPPFSVTTANGTISFTEMVQ) are extracellular. The chain crosses the membrane as a helical span at residues 301-321 (GMGAGLVVVPLMGLLESIAVA). At 322-337 (KSFASQNNYRINSNQE) the chain is on the cytoplasmic side. A helical membrane pass occupies residues 338–358 (LLALGFTNILGSLFSSYPVTG). Residues 359 to 370 (SFGRTAVNAQSG) are Extracellular-facing. A helical transmembrane segment spans residues 371–391 (VCTPAGGLMTGALVLLSLDYL). At 392-394 (TSL) the chain is on the cytoplasmic side. The helical transmembrane segment at 395-415 (FYYIPKSALAAVIIMAVVPLF) threads the bilayer. At 416 to 438 (DTKIVKTLWRVKRLDLLPLCVTF) the chain is on the extracellular side. The helical transmembrane segment at 439-459 (LLCFWEVQYGILAGTLVSVLI) threads the bilayer. Residues 460-602 (LLHSVARPKI…PEHKIALLKA (143 aa)) are Cytoplasmic-facing. Positions 466-580 (RPKIQVSEGP…EAEKYLKQEP (115 aa)) constitute an STAS domain.

This sequence belongs to the SLC26A/SulP transporter (TC 2.A.53) family.

The protein localises to the cell membrane. It localises to the lysosome membrane. The protein resides in the apical cell membrane. It is found in the basolateral cell membrane. It catalyses the reaction hydrogencarbonate(in) + chloride(out) = hydrogencarbonate(out) + chloride(in). The catalysed reaction is sulfate(in) + H(+)(in) = sulfate(out) + H(+)(out). It carries out the reaction oxalate(in) + chloride(out) = oxalate(out) + chloride(in). Its function is as follows. Sodium-independent anion exchanger mediating bicarbonate, chloride, sulfate and oxalate transport. Exhibits sodium-independent sulfate anion transporter activity that may cooperate with SLC26A2 to mediate DIDS-sensitive sulfate uptake into high endothelial venules endothelial cells (HEVEC). In the kidney, mediates chloride-bicarbonate exchange, facilitating V-ATPase-mediated acid secretion. May function as a chloride channel, playing an important role in moderating chloride homeostasis and neuronal activity in the cerebellum. This is Sodium-independent sulfate anion transporter from Bos taurus (Bovine).